Here is a 461-residue protein sequence, read N- to C-terminus: Mycosin-3 (461 aa).

The signal sequence occupies residues 1-25; the sequence is MIRAAFACLAATVVVAGWWTPPAWA. In terms of domain architecture, Peptidase S8 spans 64-397; the sequence is DPGVPTPSQT…AGNLDAVAAL (334 aa). Catalysis depends on charge relay system residues Asp-95, His-126, and Ser-342. The helical transmembrane segment at 432-452 threads the bilayer; the sequence is AFAGAAALSVLVGLTAATVAI.

This sequence belongs to the peptidase S8 family.

It localises to the cell membrane. The sequence is that of Mycosin-3 from Mycobacterium tuberculosis (strain ATCC 25618 / H37Rv).